The primary structure comprises 1028 residues: Sodium/potassium-transporting ATPase subunit alpha-4 (1028 aa).

Residues 1 to 36 (MEPGKETAATSEQKPRPTLRASNTNRQPKVKRRKKD) form a disordered region. Over 1-92 (MEPGKETAAT…NVLTPPPTTP (92 aa)) the chain is Cytoplasmic. The interval 87–89 (PPP) is interaction with phosphoinositide-3 kinase. A helical membrane pass occupies residues 93–113 (EWIKFCKQLFGGFSLLLWTGS). At 114–137 (LLCFLAYGIHVSYYQENANKDNLY) the chain is on the extracellular side. Residues 138–158 (LGIVLSAVVIITGCFSYYQEA) form a helical membrane-spanning segment. Topologically, residues 159 to 294 (KSSKIMESFK…MGKTPIATEI (136 aa)) are cytoplasmic. The chain crosses the membrane as a helical span at residues 295 to 314 (EHFIHIITAVAVFLGVTFFF). At 315–326 (LSLILGYTWLDA) the chain is on the extracellular side. The helical transmembrane segment at 327–344 (VIFLIGIIVANVPEGLLA) threads the bilayer. Residues 345-777 (TVTVCLTLTA…EEGRLIFDNL (433 aa)) are Cytoplasmic-facing. Residue Asp-382 is the 4-aspartylphosphate intermediate of the active site. Residues Asp-722 and Asp-726 each coordinate Mg(2+). Residues 778–797 (KKSIAYTLTSNIPEITPFLL) traverse the membrane as a helical segment. Residues 798–807 (FIVLSIPLPL) are Extracellular-facing. Residues 808 to 828 (GTITILCIDLGTDMVPAISLA) traverse the membrane as a helical segment. Residues 829 to 848 (YETPESDIMKRLPRNPKTDN) are Cytoplasmic-facing. The helical transmembrane segment at 849–871 (LVNDRLIGMAYGQIGMIQALAGF) threads the bilayer. At 872–923 (FTYFVILAENGFKPLDLLGIRLYWDDTNLNDLEDTYGQQWTYEQRKVVEFTC) the chain is on the extracellular side. The chain crosses the membrane as a helical span at residues 924–943 (QTAFFISIVIVQWADLIICK). The Cytoplasmic portion of the chain corresponds to 944-956 (TRRNSLFKQGMKN). Position 948 is a phosphoserine; by PKA (Ser-948). Residues 957–975 (KVLIFGLLEETILAACLSY) traverse the membrane as a helical segment. Residues 976-990 (IPGMDVALRMYPLKI) lie on the Extracellular side of the membrane. The chain crosses the membrane as a helical span at residues 991–1011 (NWWFCALPYSVLIFIYDEVRK). At 1012–1028 (LIIRRRPGGWLEKETYY) the chain is on the cytoplasmic side.

The protein belongs to the cation transport ATPase (P-type) (TC 3.A.3) family. Type IIC subfamily. In terms of assembly, the sodium/potassium-transporting ATPase is composed of a catalytic alpha subunit, an auxiliary non-catalytic beta subunit and an additional regulatory subunit.

The protein localises to the cell membrane. It carries out the reaction K(+)(out) + Na(+)(in) + ATP + H2O = K(+)(in) + Na(+)(out) + ADP + phosphate + H(+). With respect to regulation, specifically inhibited by an endogenous cardiac glycoside, ouabain. This is the catalytic component of the active enzyme, which catalyzes the hydrolysis of ATP coupled with the exchange of sodium and potassium ions across the plasma membrane. This action creates the electrochemical gradient of sodium and potassium ions, providing the energy for active transport of various nutrients. Plays a role in sperm motility. This chain is Sodium/potassium-transporting ATPase subunit alpha-4 (Atp1a4), found in Rattus norvegicus (Rat).